The following is a 165-amino-acid chain: Inorganic pyrophosphatase (165 aa).

Substrate-binding residues include Lys-21, Arg-35, and Tyr-47. Asp-57, Asp-62, and Asp-94 together coordinate Mg(2+). Tyr-131 contributes to the substrate binding site.

It belongs to the PPase family. In terms of assembly, homohexamer. Requires Mg(2+) as cofactor.

It is found in the cytoplasm. It catalyses the reaction diphosphate + H2O = 2 phosphate + H(+). Its function is as follows. Catalyzes the hydrolysis of inorganic pyrophosphate (PPi) forming two phosphate ions. The sequence is that of Inorganic pyrophosphatase from Geobacillus stearothermophilus (Bacillus stearothermophilus).